The following is a 219-amino-acid chain: MTDRLTQLQRCLDQVMEQFCATLNFIDKRHDFEPFNDKEPKMTDKHASVATPEEFSNGIDELSTDIIVKIRQITTLIDSLPGVGVSAEEQLHKIDSLQKKLVDIEDEKIHAIKKKDDLLKQVDDLITVFVGGIADSRRGTSLAPENVQEDNDIKQEAEVPTSSEAIEQKIANEKIESKIEGEYNDNINEDSDSKSADSELFMDKDDADNISESISPGKI.

Residues 86 to 125 (SAEEQLHKIDSLQKKLVDIEDEKIHAIKKKDDLLKQVDDL) adopt a coiled-coil conformation. Residues 141-219 (SLAPENVQED…ISESISPGKI (79 aa)) form a disordered region. Basic and acidic residues-rich tracts occupy residues 166–181 (IEQK…KIEG) and 191–204 (SDSK…FMDK). The span at 210-219 (ISESISPGKI) shows a compositional bias: polar residues.

The protein belongs to the Mediator complex subunit 21 family. Component of the Mediator complex.

The protein localises to the nucleus. Its function is as follows. Component of the Mediator complex, a coactivator involved in the regulated transcription of nearly all RNA polymerase II-dependent genes. Mediator functions as a bridge to convey information from gene-specific regulatory proteins to the basal RNA polymerase II transcription machinery. Mediator is recruited to promoters by direct interactions with regulatory proteins and serves as a scaffold for the assembly of a functional preinitiation complex with RNA polymerase II and the general transcription factors. The polypeptide is Mediator of RNA polymerase II transcription subunit 21 (SRB7) (Candida glabrata (strain ATCC 2001 / BCRC 20586 / JCM 3761 / NBRC 0622 / NRRL Y-65 / CBS 138) (Yeast)).